The chain runs to 462 residues: Syringate O-demethylase (462 aa).

This sequence belongs to the GcvT family.

It catalyses the reaction syringate + (6S)-5,6,7,8-tetrahydrofolate = 3-O-methylgallate + (6S)-5-methyl-5,6,7,8-tetrahydrofolate. Its pathway is secondary metabolite metabolism; lignin degradation. Its function is as follows. Involved in the catabolism of syringate. Catalyzes the conversion of syringate to 3-O-methylgallate (3MGA) in the presence of tetrahydrofolate. Has weak activity with vanillate and 3-O-methylgallate. In Sphingobium sp. (strain NBRC 103272 / SYK-6), this protein is Syringate O-demethylase.